Here is a 135-residue protein sequence, read N- to C-terminus: CDGSH iron-sulfur domain-containing protein 2B (135 aa).

Residues 1–37 are Lumenal-facing; sequence MVLETISKIIKTQLPAYLKKFPLPETIGGFARLTVLD. The helical transmembrane segment at 38 to 60 threads the bilayer; that stretch reads WLRLLPLLGILTLLGYLTIRPFL. The Cytoplasmic segment spans residues 61 to 135; that stretch reads PKKKKQKDSL…GPLILKKKII (75 aa). Residues C99, C101, C110, and H114 each contribute to the [2Fe-2S] cluster site.

This sequence belongs to the CISD protein family. CISD2 subfamily. Homodimer. [2Fe-2S] cluster is required as a cofactor.

It localises to the endoplasmic reticulum membrane. The protein localises to the mitochondrion outer membrane. In terms of biological role, regulator of autophagy that contributes to antagonize becn1-mediated cellular autophagy at the endoplasmic reticulum. Participates in the interaction of bcl2 with becn1 and is required for bcl2-mediated depression of endoplasmic reticulum Ca(2+) stores during autophagy. This Oncorhynchus mykiss (Rainbow trout) protein is CDGSH iron-sulfur domain-containing protein 2B (cisd2b).